Reading from the N-terminus, the 306-residue chain is Agmatinase (306 aa).

His126, Asp149, His151, Asp153, Asp230, and Asp232 together coordinate Mn(2+).

Belongs to the arginase family. Agmatinase subfamily. It depends on Mn(2+) as a cofactor.

It carries out the reaction agmatine + H2O = urea + putrescine. It participates in amine and polyamine biosynthesis; putrescine biosynthesis via agmatine pathway; putrescine from agmatine: step 1/1. Its function is as follows. Catalyzes the formation of putrescine from agmatine. The polypeptide is Agmatinase (Salmonella agona (strain SL483)).